The following is a 154-amino-acid chain: Protein X (154 aa).

The interval 68–117 (PCALRFTSARRMETTVNAPGNLPKVLHKRTLGLSVMSTTDLEAYFKDCVF) is mitochondrial targeting sequence.

This sequence belongs to the orthohepadnavirus protein X family. As to quaternary structure, may form homodimer. May interact with host CEBPA, CFLAR, CREB1, DDB1, E4F1, HBXIP, HSPD1/HSP60, NFKBIA, POLR2E and SMAD4. Interacts with host SMC5-SMC6 complex and induces its degradation. Interacts with host TRPC4AP; leading to prevent ubiquitination of TRPC4AP. Interacts with host PLSCR1; this interaction promotes ubiquitination and degradation of HBx and impairs HBx-mediated cell proliferation. A fraction may be phosphorylated in insect cells and HepG2 cells, a human hepatoblastoma cell line. Phosphorylated in vitro by host protein kinase C or mitogen-activated protein kinase. N-acetylated in insect cells.

The protein localises to the host cytoplasm. It is found in the host nucleus. Its subcellular location is the host mitochondrion. In terms of biological role, multifunctional protein that plays a role in silencing host antiviral defenses and promoting viral transcription. Does not seem to be essential for HBV infection. May be directly involved in development of cirrhosis and liver cancer (hepatocellular carcinoma). Most of cytosolic activities involve modulation of cytosolic calcium. The effect on apoptosis is controversial depending on the cell types in which the studies have been conducted. May induce apoptosis by localizing in mitochondria and causing loss of mitochondrial membrane potential. May also modulate apoptosis by binding host CFLAR, a key regulator of the death-inducing signaling complex (DISC). Promotes viral transcription by using the host E3 ubiquitin ligase DDB1 to target the SMC5-SMC6 complex to proteasomal degradation. This host complex would otherwise bind to viral episomal DNA, and prevents its transcription. Moderately stimulates transcription of many different viral and cellular transcription elements. Promoters and enhancers stimulated by HBx contain DNA binding sites for NF-kappa-B, AP-1, AP-2, c-EBP, ATF/CREB, or the calcium-activated factor NF-AT. The sequence is that of Protein X from Hepatitis B virus genotype B2 (isolate Vietnam/16091/1992) (HBV-B).